The chain runs to 407 residues: E3 ubiquitin-protein ligase TRIM13 (407 aa).

The RING-type zinc finger occupies 10 to 58 (CPICCSLFDDPRVLPCSHNFCKKCLEGLLEGNVRNSLWRPSPFKCPTCR). The B box-type zinc-finger motif lies at 89 to 131 (PKMPVCKEHLGQPLNIFCVTDMQLICGVCATRGSHTKHVFSSI). Residues Cys94, His97, Cys117, and His123 each contribute to the Zn(2+) site. A coiled-coil region spans residues 172–200 (LQLLTKDSDKVKEFFEKLQHTLDQKKNEI). Residues 316–336 (LLLMAVVLLGLLVFFGPTVFL) form a helical membrane-spanning segment.

In terms of assembly, interacts (via C-terminal domain) with VCP. Interacts with AKT1; the interaction ubiquitinates AKT1 and leads to its proteasomal degradation. Interacts with MDM2; the interaction ubiquitinates AKT1 and leads to its proteasomal degradation. Interacts with p62/SQSTM1. Interacts with TRAF6. Interacts with IKBKG/NEMO. Post-translationally, auto-ubiquitinated; requires the RING-type zinc finger. Auto-polyubiquitination leads to proteasomal degradation.

The protein resides in the endoplasmic reticulum membrane. It carries out the reaction S-ubiquitinyl-[E2 ubiquitin-conjugating enzyme]-L-cysteine + [acceptor protein]-L-lysine = [E2 ubiquitin-conjugating enzyme]-L-cysteine + N(6)-ubiquitinyl-[acceptor protein]-L-lysine.. Its pathway is protein modification; protein ubiquitination. Its function is as follows. Endoplasmic reticulum (ER) membrane anchored E3 ligase involved in the retrotranslocation and turnover of membrane and secretory proteins from the ER through a set of processes named ER-associated degradation (ERAD). This process acts on misfolded proteins as well as in the regulated degradation of correctly folded proteins. Enhances ionizing radiation-induced p53/TP53 stability and apoptosis via ubiquitinating MDM2 and AKT1 and decreasing AKT1 kinase activity through MDM2 and AKT1 proteasomal degradation. Regulates ER stress-induced autophagy, and may act as a tumor suppressor. Also plays a role in innate immune response by stimulating NF-kappa-B activity in the TLR2 signaling pathway. Ubiquitinates TRAF6 via the 'Lys-29'-linked polyubiquitination chain resulting in NF-kappa-B activation. Participates as well in T-cell receptor-mediated NF-kappa-B activation. In the presence of TNF, modulates the IKK complex by regulating IKBKG/NEMO ubiquitination leading to the repression of NF-kappa-B. The protein is E3 ubiquitin-protein ligase TRIM13 (Trim13) of Rattus norvegicus (Rat).